Here is a 324-residue protein sequence, read N- to C-terminus: MRAYTLIAPAKINLFLQIIGDHLQQDQPTGYHNLVMVLQSVSLSDELQLRPLSGEARSLRLDPPILLHCDHPQVPLDQTNLVYRAAALMWQKFPGQAGVEITLHKRIPIGAGLAGGSTDAAAVLVGLNLMWELGLTQLELQELGSQLGADVPFCIRGGTSLAVGRGDQLSPLPDLEGIYVVLGKYHDLSVSTPWAYQTYRQQFQASYAQTLEEQEQRRQQGGSGALLKAIAHRDGGQIGQLLHNDLEKVVLPAYPRVEYLRQQFANQSPLGTMMSGSGPTVFALADSAAAAEEIYAGVRGAIADPYLDLWICQLCNQGIQVQPL.

Lysine 11 is an active-site residue. Proline 108–threonine 118 contacts ATP. Aspartate 150 is a catalytic residue.

It belongs to the GHMP kinase family. IspE subfamily.

The enzyme catalyses 4-CDP-2-C-methyl-D-erythritol + ATP = 4-CDP-2-C-methyl-D-erythritol 2-phosphate + ADP + H(+). It participates in isoprenoid biosynthesis; isopentenyl diphosphate biosynthesis via DXP pathway; isopentenyl diphosphate from 1-deoxy-D-xylulose 5-phosphate: step 3/6. Catalyzes the phosphorylation of the position 2 hydroxy group of 4-diphosphocytidyl-2C-methyl-D-erythritol. This is 4-diphosphocytidyl-2-C-methyl-D-erythritol kinase from Cyanothece sp. (strain PCC 7425 / ATCC 29141).